Consider the following 407-residue polypeptide: Protein CNPPD1 (407 aa).

A helical membrane pass occupies residues 233–253 (CLLAVAYVSSVALAVASVAVI).

This sequence belongs to the CNPPD1 family.

The protein localises to the membrane. This is Protein CNPPD1 (Cnppd1) from Mus musculus (Mouse).